Here is a 92-residue protein sequence, read N- to C-terminus: Large ribosomal subunit protein bL28 (92 aa).

Belongs to the bacterial ribosomal protein bL28 family.

The sequence is that of Large ribosomal subunit protein bL28 from Borrelia duttonii (strain Ly).